The following is a 565-amino-acid chain: Arginine--tRNA ligase (565 aa).

Residues 128 to 138 carry the 'HIGH' region motif; the sequence is ANPTGPLHVGH.

This sequence belongs to the class-I aminoacyl-tRNA synthetase family. In terms of assembly, monomer.

The protein localises to the cytoplasm. The enzyme catalyses tRNA(Arg) + L-arginine + ATP = L-arginyl-tRNA(Arg) + AMP + diphosphate. In Albidiferax ferrireducens (strain ATCC BAA-621 / DSM 15236 / T118) (Rhodoferax ferrireducens), this protein is Arginine--tRNA ligase.